Here is a 618-residue protein sequence, read N- to C-terminus: Serine/threonine-protein kinase pkn1 (618 aa).

The Protein kinase domain occupies 15 to 381 (YKILCYLRKG…KEEVKPQPLF (367 aa)). Residues 21–29 (LRKGLWCQD) and lysine 44 each bind ATP.

This sequence belongs to the protein kinase superfamily. Ser/Thr protein kinase family. Post-translationally, autophosphorylated on serine and threonine residues.

The catalysed reaction is L-seryl-[protein] + ATP = O-phospho-L-seryl-[protein] + ADP + H(+). The enzyme catalyses L-threonyl-[protein] + ATP = O-phospho-L-threonyl-[protein] + ADP + H(+). Its function is as follows. Together with the serine/threonine kinase PknD, may play a role in the specific interactions with host proteins during intracellular growth. This is Serine/threonine-protein kinase pkn1 (pkn1) from Chlamydia caviae (strain ATCC VR-813 / DSM 19441 / 03DC25 / GPIC) (Chlamydophila caviae).